We begin with the raw amino-acid sequence, 283 residues long: Probable cytochrome c oxidase subunit 3 (283 aa).

Helical transmembrane passes span 26 to 46, 51 to 71, 94 to 114, 179 to 199, 217 to 237, and 261 to 281; these read PWPV…VSFM, FNIY…YSWW, IGMA…FASF, CVTA…MQAY, FYLA…FLII, and AWYW…VYIF.

Belongs to the cytochrome c oxidase subunit 3 family.

It is found in the cell membrane. It catalyses the reaction 4 Fe(II)-[cytochrome c] + O2 + 8 H(+)(in) = 4 Fe(III)-[cytochrome c] + 2 H2O + 4 H(+)(out). The polypeptide is Probable cytochrome c oxidase subunit 3 (ctaE) (Rickettsia conorii (strain ATCC VR-613 / Malish 7)).